Here is a 55-residue protein sequence, read N- to C-terminus: U17-myrmicitoxin-Mri1b (55 aa).

Positions 1 to 31 (MENSRTSTFTAYVTVAFLLISTFVTMVVTES) are cleaved as a signal peptide. Q32 is modified (pyrrolidone carboxylic acid).

In terms of processing, contains 1 disulfide bond. As to expression, expressed by the venom gland.

Its subcellular location is the secreted. The sequence is that of U17-myrmicitoxin-Mri1b from Manica rubida (European giant red ant).